We begin with the raw amino-acid sequence, 343 residues long: Pyridoxal 5'-phosphate synthase subunit PDX1 (343 aa).

Asp73 lines the D-ribose 5-phosphate pocket. The active-site Schiff-base intermediate with D-ribose 5-phosphate is the Lys130. Gly202 is a D-ribose 5-phosphate binding site. Gln214 contacts D-glyceraldehyde 3-phosphate. Residues Gly263 and 284–285 each bind D-ribose 5-phosphate; that span reads GS.

Belongs to the PdxS/SNZ family.

The enzyme catalyses aldehydo-D-ribose 5-phosphate + D-glyceraldehyde 3-phosphate + L-glutamine = pyridoxal 5'-phosphate + L-glutamate + phosphate + 3 H2O + H(+). It functions in the pathway cofactor biosynthesis; pyridoxal 5'-phosphate biosynthesis. In terms of biological role, catalyzes the formation of pyridoxal 5'-phosphate from ribose 5-phosphate (RBP), glyceraldehyde 3-phosphate (G3P) and ammonia. The ammonia is provided by PDX2. Can also use ribulose 5-phosphate and dihydroxyacetone phosphate as substrates, resulting from enzyme-catalyzed isomerization of RBP and G3P, respectively. Also plays an indirect role in resistance to singlet oxygen-generating photosensitizers. The chain is Pyridoxal 5'-phosphate synthase subunit PDX1 (PDX1) from Cercospora nicotianae (Barn spot disease fungus).